The sequence spans 285 residues: MQSLNYLVVILTVAGVLVILGFTPLIRKLKIQFYCLQVFAAILFLYVFFGRQIIYIFPDIYGTAAKAKNAVANVPLDSLRLSRIFLLDLCPFFALIGPIFIFLRQKKVAGVLAIFGFYGAAITLFGELIFTPLKQEEIVKFLFVGLENNQVYFMMHFLSFLLSLAVFLWDDGFSLISFFYIHVFALAYLSYVALMVNIFKGQITGNTTGILAEDWLSGEYKNVAVFLKLDPKNADLIFGVSFGLSYFAIVLLTVLVNIPTFIQLTKDKQMVKLALQLKKAQASVA.

A run of 7 helical transmembrane segments spans residues 6-26 (YLVV…TPLI), 38-58 (VFAA…YIFP), 84-104 (IFLL…IFLR), 110-130 (GVLA…ELIF), 153-173 (FMMH…DDGF), 176-196 (ISFF…ALMV), and 236-256 (LIFG…TVLV).

The protein localises to the cell membrane. This is an uncharacterized protein from Mycoplasma pneumoniae (strain ATCC 29342 / M129 / Subtype 1) (Mycoplasmoides pneumoniae).